The chain runs to 513 residues: ATP synthase subunit alpha (513 aa).

169–176 (GDRQTGKT) serves as a coordination point for ATP.

This sequence belongs to the ATPase alpha/beta chains family. As to quaternary structure, F-type ATPases have 2 components, CF(1) - the catalytic core - and CF(0) - the membrane proton channel. CF(1) has five subunits: alpha(3), beta(3), gamma(1), delta(1), epsilon(1). CF(0) has three main subunits: a(1), b(2) and c(9-12). The alpha and beta chains form an alternating ring which encloses part of the gamma chain. CF(1) is attached to CF(0) by a central stalk formed by the gamma and epsilon chains, while a peripheral stalk is formed by the delta and b chains.

The protein localises to the cell inner membrane. The enzyme catalyses ATP + H2O + 4 H(+)(in) = ADP + phosphate + 5 H(+)(out). Produces ATP from ADP in the presence of a proton gradient across the membrane. The alpha chain is a regulatory subunit. This Haemophilus influenzae (strain PittGG) protein is ATP synthase subunit alpha.